The chain runs to 123 residues: UPF0102 protein APP7_1414 (123 aa).

This sequence belongs to the UPF0102 family.

The protein is UPF0102 protein APP7_1414 of Actinobacillus pleuropneumoniae serotype 7 (strain AP76).